The following is a 178-amino-acid chain: Small ribosomal subunit protein uS7c (178 aa).

Residues 137–146 (QKKEEIEKSK) are compositionally biased toward basic and acidic residues. Positions 137–178 (QKKEEIEKSKSPVNNNKKFISKNKKSKNKKQKKRLKRKKNIY) are disordered. The segment covering 155 to 178 (FISKNKKSKNKKQKKRLKRKKNIY) has biased composition (basic residues).

This sequence belongs to the universal ribosomal protein uS7 family. Part of the 30S ribosomal subunit.

The protein resides in the plastid. Functionally, one of the primary rRNA binding proteins, it binds directly to 16S rRNA where it nucleates assembly of the head domain of the 30S subunit. The sequence is that of Small ribosomal subunit protein uS7c (rps7) from Euglena longa (Euglenophycean alga).